Consider the following 330-residue polypeptide: Cathepsin K (330 aa).

A signal peptide spans 1 to 16; it reads MWGLKVVLLLPVMSSA. A propeptide spans 17–115 (activation peptide); the sequence is LYPEEILDTQ…TLYIPDWEGR (99 aa). N-linked (GlcNAc...) asparagine glycosylation is present at N104. 3 cysteine pairs are disulfide-bonded: C137–C178, C171–C211, and C270–C319. C140 is a catalytic residue. Active-site residues include H277 and N297.

This sequence belongs to the peptidase C1 family. Expressed in the thyroid epithelial cells.

It localises to the lysosome. The protein localises to the secreted. The protein resides in the apical cell membrane. It carries out the reaction Broad proteolytic activity. With small-molecule substrates and inhibitors, the major determinant of specificity is P2, which is preferably Leu, Met &gt; Phe, and not Arg.. Its function is as follows. Thiol protease involved in osteoclastic bone resorption and may participate partially in the disorder of bone remodeling. Displays potent endoprotease activity against fibrinogen at acid pH. May play an important role in extracellular matrix degradation. Involved in the release of thyroid hormone thyroxine (T4) by limited proteolysis of TG/thyroglobulin in the thyroid follicle lumen. The sequence is that of Cathepsin K (CTSK) from Sus scrofa (Pig).